A 177-amino-acid chain; its full sequence is Large ribosomal subunit protein uL6 (177 aa).

The disordered stretch occupies residues 155–177 (EPYKGKGVKHADERIFRKEGKKK).

This sequence belongs to the universal ribosomal protein uL6 family. Part of the 50S ribosomal subunit.

Its function is as follows. This protein binds to the 23S rRNA, and is important in its secondary structure. It is located near the subunit interface in the base of the L7/L12 stalk, and near the tRNA binding site of the peptidyltransferase center. This Bartonella tribocorum (strain CIP 105476 / IBS 506) protein is Large ribosomal subunit protein uL6.